The following is a 621-amino-acid chain: Zinc metalloproteinase-disintegrin-like NaMP (621 aa).

The first 20 residues, 1 to 20 (MIQPLLVAICLVVFPYQGSS), serve as a signal peptide directing secretion. A propeptide spanning residues 21–188 (TILESGKVRD…GESDETIKKI (168 aa)) is cleaved from the precursor. Residues 206–402 (KHIELYMVAD…KSAQCILNDP (197 aa)) enclose the Peptidase M12B domain. Residues Asn225, Asn268, and Asn319 are each glycosylated (N-linked (GlcNAc...) asparagine). Disulfide bonds link Cys317–Cys397, Cys357–Cys381, Cys359–Cys364, Cys413–Cys442, Cys424–Cys437, Cys426–Cys432, Cys436–Cys459, Cys450–Cys456, Cys455–Cys481, Cys468–Cys488, Cys475–Cys507, Cys500–Cys512, Cys519–Cys569, Cys534–Cys579, Cys547–Cys557, Cys564–Cys605, and Cys599–Cys610. Position 342 (His342) interacts with Zn(2+). Glu343 is a catalytic residue. Positions 346 and 352 each coordinate Zn(2+). The Disintegrin domain occupies 410–496 (TAICGNGFVE…ECPMNHFHMN (87 aa)). Residues 474-476 (DCD) carry the D/ECD-tripeptide motif. An N-linked (GlcNAc...) asparagine glycan is attached at Asn551.

Belongs to the venom metalloproteinase (M12B) family. P-III subfamily. P-IIIa sub-subfamily. As to quaternary structure, monomer. Zn(2+) is required as a cofactor. In terms of tissue distribution, expressed by the venom gland.

The protein resides in the secreted. Its function is as follows. Snake venom zinc metalloproteinase that inhibits platelet aggregation and degrades fibrinogen. This chain is Zinc metalloproteinase-disintegrin-like NaMP, found in Naja atra (Chinese cobra).